The following is a 301-amino-acid chain: 1,5-anhydro-D-fructose reductase (301 aa).

An NADP(+)-binding site is contributed by Asp-35. Residue Tyr-40 is the Proton donor of the active site. His-102 lines the substrate pocket. NADP(+) contacts are provided by residues Gln-175 and 246–258 (IPKSVTPSRIREN).

This sequence belongs to the aldo/keto reductase family. Monomer.

The protein localises to the cytoplasm. It catalyses the reaction 1,5-anhydro-D-glucitol + NADP(+) = 1,5-anhydro-D-fructose + NADPH + H(+). Inhibited by p-chloromercuribenzoic acid and alkyliodines. Its function is as follows. Catalyzes the NADPH-dependent reduction of 1,5-anhydro-D-fructose (AF) to 1,5-anhydro-D-glucitol. This Mus musculus (Mouse) protein is 1,5-anhydro-D-fructose reductase (Akr1e2).